Consider the following 714-residue polypeptide: DNA ligase (714 aa).

NAD(+) is bound by residues 47–51 (DAEYD), 96–97 (SL), and Glu128. Catalysis depends on Lys130, which acts as the N6-AMP-lysine intermediate. Arg151, Glu188, Lys306, and Lys330 together coordinate NAD(+). Positions 435, 438, 453, and 459 each coordinate Zn(2+). A BRCT domain is found at 637–714 (RRDTAVAGKT…TEDEWLALIS (78 aa)).

This sequence belongs to the NAD-dependent DNA ligase family. LigA subfamily. Mg(2+) is required as a cofactor. The cofactor is Mn(2+).

It catalyses the reaction NAD(+) + (deoxyribonucleotide)n-3'-hydroxyl + 5'-phospho-(deoxyribonucleotide)m = (deoxyribonucleotide)n+m + AMP + beta-nicotinamide D-nucleotide.. Functionally, DNA ligase that catalyzes the formation of phosphodiester linkages between 5'-phosphoryl and 3'-hydroxyl groups in double-stranded DNA using NAD as a coenzyme and as the energy source for the reaction. It is essential for DNA replication and repair of damaged DNA. The sequence is that of DNA ligase from Rhodopseudomonas palustris (strain HaA2).